The following is a 31-amino-acid chain: Cyclotide psybry C (31 aa).

Positions 1–31 (GFNPCGETCQIDQTCHAPGCTCSIANICVRN) form a cross-link, cyclopeptide (Gly-Asn). 3 disulfides stabilise this stretch: C5/C20, C9/C22, and C15/C28.

In terms of processing, this is a cyclic peptide.

In terms of biological role, probably participates in a plant defense mechanism. The protein is Cyclotide psybry C of Psychotria brachyceras.